We begin with the raw amino-acid sequence, 652 residues long: Phosphoglucomutase 1, chloroplastic (652 aa).

The N-terminal 84 residues, 1–84, are a transit peptide targeting the chloroplast; that stretch reads MAFSAAASAS…LAARRTLRVR (84 aa). Alpha-D-glucose 1,6-bisphosphate-binding residues include Arg118 and Ser211. The active-site Phosphoserine intermediate is Ser211. Ser211, Asp376, Asp378, and Asp380 together coordinate Mg(2+). Ser211 carries the post-translational modification Phosphoserine. Alpha-D-glucose 1,6-bisphosphate contacts are provided by Asp380, Arg381, Thr443, Glu462, Ser464, and Lys475.

Belongs to the phosphohexose mutase family. Mg(2+) is required as a cofactor.

The protein localises to the plastid. It localises to the chloroplast. The enzyme catalyses alpha-D-glucose 1-phosphate = alpha-D-glucose 6-phosphate. It catalyses the reaction O-phospho-L-seryl-[protein] + alpha-D-glucose 1-phosphate = alpha-D-glucose 1,6-bisphosphate + L-seryl-[protein]. It carries out the reaction alpha-D-glucose 1,6-bisphosphate + L-seryl-[protein] = O-phospho-L-seryl-[protein] + alpha-D-glucose 6-phosphate. Inhibited by the Calvin cycle intermediates fructose-1,6-bisphosphate and ribulose-1,5-bisphosphate. Functionally, catalyzes the reversible isomerization of alpha-D-glucose 1-phosphate to alpha-D-glucose 6-phosphate. The mechanism proceeds via the intermediate compound alpha-D-glucose 1,6-bisphosphate. This enzyme participates in both the breakdown and synthesis of glucose. Required for sucrose production and accumulation necessary during plant development. Promotes gravitropic responses, negative in shoots but positive in roots, by facilitating starch granules (statoliths) formation. The sequence is that of Phosphoglucomutase 1, chloroplastic from Marchantia polymorpha (Common liverwort).